We begin with the raw amino-acid sequence, 307 residues long: uncharacterized protein (307 aa).

In terms of domain architecture, HTH lysR-type spans 11-68 (IRLRHLHTFVAVAQQGTLGRAAETLNLSQPALSKTLNELEQLTGARLFERGRQGAQLT). Residues 28–47 (LGRAAETLNLSQPALSKTLN) constitute a DNA-binding region (H-T-H motif).

Belongs to the LysR transcriptional regulatory family.

This is an uncharacterized protein from Escherichia coli (strain K12).